A 557-amino-acid polypeptide reads, in one-letter code: E3 ubiquitin-protein ligase rnf168 (557 aa).

The segment at 16–55 adopts an RING-type zinc-finger fold; it reads CPICQEILLEPVTLPCKHTLCNPCFQMTVEKASLCCPFCR. Positions 112 to 130 match the LR motif 1 motif; that stretch reads LCQPGEIRQEYEAEVSKIE. Residues 145–153 carry the UMI motif motif; that stretch reads EDYIQKLLA. Short sequence motifs (MIU motif) lie at residues 170–193 and 422–445; these read MEEQLKIDEELARTLSVDLDVSNA and RRRQEEQDRLLALQLQRELDKELK. The LR motif 2 signature appears at 449–460; sequence RGKGSPDEYELR. The segment at 482–543 is disordered; that stretch reads PLRKEIPVQD…GINVLKPINK (62 aa). Residues 490–500 show a composition bias toward polar residues; that stretch reads QDNSRNTQSEY. Basic residues predominate over residues 508–521; the sequence is PSRKNSVRSARVRQ.

This sequence belongs to the RNF168 family. In terms of assembly, monomer.

It is found in the nucleus. The enzyme catalyses S-ubiquitinyl-[E2 ubiquitin-conjugating enzyme]-L-cysteine + [acceptor protein]-L-lysine = [E2 ubiquitin-conjugating enzyme]-L-cysteine + N(6)-ubiquitinyl-[acceptor protein]-L-lysine.. It participates in protein modification; protein ubiquitination. E3 ubiquitin-protein ligase required for accumulation of repair proteins to sites of DNA damage. Acts with ube2n/ubc13 to amplify the rnf8-dependent histone ubiquitination. Recruited to sites of DNA damage at double-strand breaks (DSBs) by binding to ubiquitinated histone H2A and ubiquitinates histone H2A and H2AX, leading to amplify the rnf8-dependent H2A ubiquitination and promoting the formation of 'Lys-63'-linked ubiquitin conjugates. This leads to concentrate ubiquitinated histones H2A and H2AX at DNA lesions to the threshold required for recruitment of tp53bp1 and brca1. Catalyzes monoubiquitination of 'Lys-13' and 'Lys-15' of nucleosomal histone H2A (H2AK13Ub and H2AK15Ub, respectively). The sequence is that of E3 ubiquitin-protein ligase rnf168 from Xenopus laevis (African clawed frog).